The primary structure comprises 470 residues: Aspartate-semialdehyde dehydrogenase 1 (470 aa).

Residues T145 and K171 each contribute to the NAD(+) site. D243 is an active-site residue. Residue G245 coordinates NAD(+). C277 is an active-site residue. Residue E371 coordinates NAD(+).

The protein belongs to the aldehyde dehydrogenase family.

It carries out the reaction L-aspartate 4-semialdehyde + NAD(+) + H2O = L-aspartate + NADH + 2 H(+). In terms of biological role, dehydrogenase involved in the degradation of canavanine, the delta-oxa-analog of arginine, allowing growth on canavanine as sole nitrogen and carbon source. Probably catalyzes the NAD(+)-dependent oxidation of L-aspartate-semialdehyde to L-aspartate. The chain is Aspartate-semialdehyde dehydrogenase 1 from Pseudomonas canavaninivorans.